The chain runs to 252 residues: ATP synthase subunit a, chloroplastic (252 aa).

5 consecutive transmembrane segments (helical) span residues 41–61, 100–120, 138–158, 204–224, and 225–245; these read GQVL…TLLA, VPFL…GALL, DINT…YAGI, LIVG…LMLL, and GVFT…AYIG.

This sequence belongs to the ATPase A chain family. F-type ATPases have 2 components, CF(1) - the catalytic core - and CF(0) - the membrane proton channel. CF(1) has five subunits: alpha(3), beta(3), gamma(1), delta(1), epsilon(1). CF(0) has four main subunits: a, b, b' and c.

The protein resides in the plastid. It is found in the chloroplast thylakoid membrane. Functionally, key component of the proton channel; it plays a direct role in the translocation of protons across the membrane. This Oedogonium cardiacum (Filamentous green alga) protein is ATP synthase subunit a, chloroplastic.